Consider the following 304-residue polypeptide: Galactofuranosyltransferase GlfT1 (304 aa).

The protein belongs to the glycosyltransferase 2 family. In terms of assembly, is probably part of an AG biosynthetic complex.

The protein resides in the cell membrane. Its subcellular location is the secreted. It localises to the cell wall. It carries out the reaction alpha-L-rhamnosyl-(1-&gt;3)-N-acetyl-alpha-D-glucosaminyl-diphospho-trans,octa-cis-decaprenol + 2 UDP-alpha-D-galactofuranose = beta-D-galactofuranosyl-(1-&gt;5)-beta-D-galactofuranosyl-(1-&gt;4)-alpha-L-rhamnosyl-(1-&gt;3)-N-acetyl-alpha-D-glucosaminyl-diphospho-trans,octa-cis-decaprenol + 2 UDP + 2 H(+). It functions in the pathway cell wall biogenesis; cell wall polysaccharide biosynthesis. In terms of biological role, involved in the biosynthesis of the arabinogalactan (AG) region of the mycolylarabinogalactan-peptidoglycan (mAGP) complex, an essential component of the mycobacterial cell wall. Catalyzes the transfer of the first two galactofuranosyl (Galf) units from UDP-galactofuranose (UDP-Galf) onto the rhamnosyl-GlcNAc-diphospho-decaprenol (Rha-GlcNAc-PP-C50) acceptor, yielding galactofuranosyl-galactofuranosyl-rhamnosyl-GlcNAc-diphospho-decaprenol (Galf-Galf-Rha-GlcNAc-PP-C50). Thus, GlfT1 is the initiator of galactan synthesis, while GlfT2 continues with the subsequent polymerization events. This is Galactofuranosyltransferase GlfT1 from Mycobacterium tuberculosis (strain CDC 1551 / Oshkosh).